Reading from the N-terminus, the 901-residue chain is HTH-type transcriptional regulator MalT (901 aa).

39 to 46 is a binding site for ATP; sequence SPAGYGKT. Positions 829–894 constitute an HTH luxR-type domain; sequence ELIRTSPLTQ…DAVQHAQQLL (66 aa). A DNA-binding region (H-T-H motif) is located at residues 853–872; the sequence is NEQIAGELAVAATTIKTHIR.

It belongs to the MalT family. In terms of assembly, monomer in solution. Oligomerizes to an active state in the presence of the positive effectors ATP and maltotriose.

Activated by ATP and maltotriose, which are both required for DNA binding. Functionally, positively regulates the transcription of the maltose regulon whose gene products are responsible for uptake and catabolism of malto-oligosaccharides. Specifically binds to the promoter region of its target genes, recognizing a short DNA motif called the MalT box. The polypeptide is HTH-type transcriptional regulator MalT (Enterobacter sp. (strain 638)).